Reading from the N-terminus, the 383-residue chain is Acetylornithine deacetylase (383 aa).

Residue His-80 coordinates Zn(2+). Asp-82 is an active-site residue. Asp-112 contacts Zn(2+). The active site involves Glu-144. Zn(2+) contacts are provided by Glu-145, Glu-169, and His-355.

Belongs to the peptidase M20A family. ArgE subfamily. As to quaternary structure, homodimer. Zn(2+) serves as cofactor. Co(2+) is required as a cofactor. The cofactor is glutathione.

The protein localises to the cytoplasm. The catalysed reaction is N(2)-acetyl-L-ornithine + H2O = L-ornithine + acetate. It functions in the pathway amino-acid biosynthesis; L-arginine biosynthesis; L-ornithine from N(2)-acetyl-L-ornithine (linear): step 1/1. Functionally, catalyzes the hydrolysis of the amide bond of N(2)-acetylated L-amino acids. Cleaves the acetyl group from N-acetyl-L-ornithine to form L-ornithine, an intermediate in L-arginine biosynthesis pathway, and a branchpoint in the synthesis of polyamines. The protein is Acetylornithine deacetylase of Shigella flexneri serotype 5b (strain 8401).